Consider the following 490-residue polypeptide: Serine/threonine-protein kinase PBL35 (490 aa).

2 disordered regions span residues 1-39 (MGFD…RNSE) and 80-103 (SAIV…SNAE). Positions 14–39 (SKTSNENEKKKKKRRRKKNNNVRNSE) form a coiled coil. Basic residues predominate over residues 23–33 (KKKKRRRKKNN). Residues 94 to 103 (SSTTTTSNAE) are compositionally biased toward low complexity. A Protein kinase domain is found at 136-422 (FRPESLLGEG…VEVLKPLPHL (287 aa)). ATP is bound by residues 142 to 150 (LGEGGFGCV) and lysine 174. At tyrosine 219 the chain carries Phosphotyrosine. The active-site Proton acceptor is the aspartate 269. 2 positions are modified to phosphoserine: serine 273 and serine 303. Phosphothreonine is present on residues threonine 304 and threonine 309. Tyrosine 317 carries the phosphotyrosine modification. The tract at residues 442-490 (AGSGSGSGRGFGSRNGQPVFRTLSSPHGQAGSSPYRHQIPSPKPKGATT) is disordered. A compositionally biased stretch (gly residues) spans 444–454 (SGSGSGRGFGS). Residues 463 to 473 (TLSSPHGQAGS) are compositionally biased toward polar residues.

Belongs to the protein kinase superfamily. Ser/Thr protein kinase family. In terms of assembly, interacts with SD129. Phosphorylated by SD129 in response to the pathogen-associated molecular pattern (PAMP) 3-OH-C10:0, a medium-chain 3-hydroxy fatty acid.

The protein resides in the cell membrane. The enzyme catalyses L-seryl-[protein] + ATP = O-phospho-L-seryl-[protein] + ADP + H(+). The catalysed reaction is L-threonyl-[protein] + ATP = O-phospho-L-threonyl-[protein] + ADP + H(+). Involved in chitin-triggered immune signaling and is required for reactive oxygen species (ROS) production. Acts downstream of SD129 in defense signaling triggered by the pathogen-associated molecular pattern (PAMP) 3-OH-C10:0, a medium-chain 3-hydroxy fatty acid. The chain is Serine/threonine-protein kinase PBL35 from Arabidopsis thaliana (Mouse-ear cress).